Here is a 147-residue protein sequence, read N- to C-terminus: Spermidine export protein MdtJ (147 aa).

4 helical membrane-spanning segments follow: residues 1–21 (MIYWIFLGLAIIAEIIGTLSM), 31–51 (TGHIVMYFMITGSYVMLSLAV), 54–74 (VALGVAYALWEGIGILIITIF), and 81–101 (ETLSPLKIAGLVTLIGGILLV). Residues 105 to 117 (TRKPKQPNRHRGN) show a composition bias toward basic residues. Positions 105–147 (TRKPKQPNRHRGNRPPSVQGLKTQTTGHHKGVAVESGEHHAAA) are disordered.

It belongs to the drug/metabolite transporter (DMT) superfamily. Small multidrug resistance (SMR) (TC 2.A.7.1) family. MdtJ subfamily. In terms of assembly, forms a complex with MdtI.

The protein localises to the cell inner membrane. Functionally, catalyzes the excretion of spermidine. This Yersinia pseudotuberculosis serotype O:3 (strain YPIII) protein is Spermidine export protein MdtJ.